The primary structure comprises 156 residues: Small ribosomal subunit protein uS7 (156 aa).

This sequence belongs to the universal ribosomal protein uS7 family. As to quaternary structure, part of the 30S ribosomal subunit. Contacts proteins S9 and S11.

One of the primary rRNA binding proteins, it binds directly to 16S rRNA where it nucleates assembly of the head domain of the 30S subunit. Is located at the subunit interface close to the decoding center, probably blocks exit of the E-site tRNA. This Pediococcus pentosaceus (strain ATCC 25745 / CCUG 21536 / LMG 10740 / 183-1w) protein is Small ribosomal subunit protein uS7.